Consider the following 303-residue polypeptide: MQKFDTRTFQGLILTLQDYWARQGCTIVQPLDMEVGAGTSHPMTCLRALGPEPMATAYVQPSRRPTDGRYGENPNRLQHYYQFQVVIKPSPDNIQELYLGSLKELGMDPTIHDIRFVEDNWENPTLGAWGLGWEVWLNGMEVTQFTYFQQVGGLECKPVTGEITYGLERLAMYIQGVDSVYDLVWSDGPLGKTTYGDVFHQNEVEQSTYNFEYADVDFLFSCFEQYEKEAQQLLALETPLPLPAYERILKAAHSFNLLDARKAISVTERQRYILRIRTLTKAVAEAYYASREALGFPMCNKNK.

The protein belongs to the class-II aminoacyl-tRNA synthetase family. In terms of assembly, tetramer of two alpha and two beta subunits.

Its subcellular location is the cytoplasm. It catalyses the reaction tRNA(Gly) + glycine + ATP = glycyl-tRNA(Gly) + AMP + diphosphate. The chain is Glycine--tRNA ligase alpha subunit from Klebsiella pneumoniae (strain 342).